A 30-amino-acid chain; its full sequence is Trypsin inhibitor 1 (30 aa).

Cystine bridges form between Cys4-Cys21, Cys11-Cys23, and Cys17-Cys29.

It belongs to the protease inhibitor I7 (squash-type serine protease inhibitor) family.

The protein localises to the secreted. Inhibits trypsin. The polypeptide is Trypsin inhibitor 1 (Momordica charantia (Bitter gourd)).